The sequence spans 301 residues: Polyamine aminopropyltransferase (301 aa).

Positions tryptophan 4–valine 240 constitute a PABS domain. Glutamine 33 is an S-methyl-5'-thioadenosine binding site. Residues histidine 64 and glutamate 89 each contribute to the spermidine site. Residues aspartate 109 and aspartate 141–glycine 142 each bind S-methyl-5'-thioadenosine. Aspartate 159 acts as the Proton acceptor in catalysis.

It belongs to the spermidine/spermine synthase family. In terms of assembly, homotrimer.

The protein resides in the cytoplasm. The catalysed reaction is S-adenosyl 3-(methylsulfanyl)propylamine + putrescine = S-methyl-5'-thioadenosine + spermidine + H(+). The enzyme catalyses S-adenosyl 3-(methylsulfanyl)propylamine + propane-1,3-diamine = norspermidine + S-methyl-5'-thioadenosine + H(+). It catalyses the reaction norspermidine + S-adenosyl 3-(methylsulfanyl)propylamine = norspermine + S-methyl-5'-thioadenosine + H(+). It carries out the reaction S-adenosyl 3-(methylsulfanyl)propylamine + spermidine = thermospermine + S-methyl-5'-thioadenosine + H(+). It functions in the pathway amine and polyamine biosynthesis; spermidine biosynthesis; spermidine from putrescine: step 1/1. Competitively inhibited by 5-methylthioadenosine, 5-methylthiotubercidin, S-adenosyl(5)-3-thiopropylamine and S-adenosyl-3-thio-l,8-diaminooctane. In terms of biological role, involved in the biosynthesis of polyamines which are thought to support the growth of thermophilic microorganisms under high-temperature conditions. It seems that long-chain and branched-chain of polyamines effectively stabilize DNA and RNA, respectively. Catalyzes the irreversible transfer of a propylamine group from the amino donor S-adenosylmethioninamine (decarboxy-AdoMet) to various amine acceptors such as putrescine (1,4-diaminobutane), 1,3-diaminopropane, sym-norspermidine and spermidine. The biosynthesis of caldopentamine from norspermine has been also observed, but with a very low activity. The reaction involves a nucleophilic attack on the C-3 methylene of the propylamine moiety adjacent to the positively charged sulfur of decarboxy-AdoMet. S-adenosylmethioninamine is the only amino donor. The protein is Polyamine aminopropyltransferase of Saccharolobus solfataricus (strain ATCC 35092 / DSM 1617 / JCM 11322 / P2) (Sulfolobus solfataricus).